Reading from the N-terminus, the 293-residue chain is Ribosomal RNA small subunit methyltransferase H (293 aa).

Residues G32 to H34, D51, F78, D99, and Q106 each bind S-adenosyl-L-methionine. The segment at P271 to I293 is disordered.

This sequence belongs to the methyltransferase superfamily. RsmH family.

It is found in the cytoplasm. The enzyme catalyses cytidine(1402) in 16S rRNA + S-adenosyl-L-methionine = N(4)-methylcytidine(1402) in 16S rRNA + S-adenosyl-L-homocysteine + H(+). Its function is as follows. Specifically methylates the N4 position of cytidine in position 1402 (C1402) of 16S rRNA. In Persephonella marina (strain DSM 14350 / EX-H1), this protein is Ribosomal RNA small subunit methyltransferase H.